Here is a 434-residue protein sequence, read N- to C-terminus: Nicotinate phosphoribosyltransferase (434 aa).

The residue at position 242 (His-242) is a Phosphohistidine; by autocatalysis.

The protein belongs to the NAPRTase family. Post-translationally, transiently phosphorylated on a His residue during the reaction cycle. Phosphorylation strongly increases the affinity for substrates and increases the rate of nicotinate D-ribonucleotide production. Dephosphorylation regenerates the low-affinity form of the enzyme, leading to product release.

It catalyses the reaction nicotinate + 5-phospho-alpha-D-ribose 1-diphosphate + ATP + H2O = nicotinate beta-D-ribonucleotide + ADP + phosphate + diphosphate. The protein operates within cofactor biosynthesis; NAD(+) biosynthesis; nicotinate D-ribonucleotide from nicotinate: step 1/1. Catalyzes the synthesis of beta-nicotinate D-ribonucleotide from nicotinate and 5-phospho-D-ribose 1-phosphate at the expense of ATP. The sequence is that of Nicotinate phosphoribosyltransferase from Rhizobium rhizogenes (strain K84 / ATCC BAA-868) (Agrobacterium radiobacter).